The primary structure comprises 215 residues: Orotate phosphoribosyltransferase (215 aa).

K26 is a 5-phospho-alpha-D-ribose 1-diphosphate binding site. 34-35 (FF) provides a ligand contact to orotate. 5-phospho-alpha-D-ribose 1-diphosphate contacts are provided by residues 72-73 (YK), R99, K100, K103, H105, and 125-133 (DDVISSGIS). Orotate is bound by residues S129 and R157.

Belongs to the purine/pyrimidine phosphoribosyltransferase family. PyrE subfamily. In terms of assembly, homodimer. Mg(2+) serves as cofactor.

It catalyses the reaction orotidine 5'-phosphate + diphosphate = orotate + 5-phospho-alpha-D-ribose 1-diphosphate. It functions in the pathway pyrimidine metabolism; UMP biosynthesis via de novo pathway; UMP from orotate: step 1/2. Its function is as follows. Catalyzes the transfer of a ribosyl phosphate group from 5-phosphoribose 1-diphosphate to orotate, leading to the formation of orotidine monophosphate (OMP). In Halorhodospira halophila (strain DSM 244 / SL1) (Ectothiorhodospira halophila (strain DSM 244 / SL1)), this protein is Orotate phosphoribosyltransferase.